A 281-amino-acid polypeptide reads, in one-letter code: ATP phosphoribosyltransferase (281 aa).

Belongs to the ATP phosphoribosyltransferase family. Long subfamily. Mg(2+) serves as cofactor.

It localises to the cytoplasm. The enzyme catalyses 1-(5-phospho-beta-D-ribosyl)-ATP + diphosphate = 5-phospho-alpha-D-ribose 1-diphosphate + ATP. It participates in amino-acid biosynthesis; L-histidine biosynthesis; L-histidine from 5-phospho-alpha-D-ribose 1-diphosphate: step 1/9. Feedback inhibited by histidine. In terms of biological role, catalyzes the condensation of ATP and 5-phosphoribose 1-diphosphate to form N'-(5'-phosphoribosyl)-ATP (PR-ATP). Has a crucial role in the pathway because the rate of histidine biosynthesis seems to be controlled primarily by regulation of HisG enzymatic activity. The protein is ATP phosphoribosyltransferase of Natronomonas pharaonis (strain ATCC 35678 / DSM 2160 / CIP 103997 / JCM 8858 / NBRC 14720 / NCIMB 2260 / Gabara) (Halobacterium pharaonis).